Reading from the N-terminus, the 260-residue chain is Snake venom serine protease Dav-X (260 aa).

Residues methionine 1–alanine 18 form the signal peptide. The propeptide occupies glutamine 19–leucine 24. The Peptidase S1 domain maps to valine 25–alanine 251. Disulfide bonds link cysteine 31–cysteine 165, cysteine 52–cysteine 68, cysteine 102–cysteine 258, cysteine 144–cysteine 212, cysteine 176–cysteine 191, and cysteine 202–cysteine 227. Histidine 67 acts as the Charge relay system in catalysis. N-linked (GlcNAc...) asparagine glycosylation occurs at asparagine 81. Aspartate 112 acts as the Charge relay system in catalysis. 2 N-linked (GlcNAc...) asparagine glycosylation sites follow: asparagine 124 and asparagine 172. The Charge relay system role is filled by serine 206. Residue asparagine 241 is glycosylated (N-linked (GlcNAc...) asparagine).

It belongs to the peptidase S1 family. Snake venom subfamily. As to quaternary structure, monomer. Expressed by the venom gland.

Its subcellular location is the secreted. In terms of biological role, snake venom serine protease that may act in the hemostasis system of the prey. The polypeptide is Snake venom serine protease Dav-X (Deinagkistrodon acutus (Hundred-pace snake)).